A 398-amino-acid chain; its full sequence is S-adenosylmethionine synthase (398 aa).

His26 provides a ligand contact to ATP. Asp28 is a binding site for Mg(2+). Glu54 is a binding site for K(+). L-methionine contacts are provided by Glu67 and Gln110. The tract at residues 110–120 is flexible loop; the sequence is QSPDIAQGVNE. Residues 177-179, 243-244, Asp252, 258-259, Ala275, and Lys279 contribute to the ATP site; these read DAK, RF, and RK. Position 252 (Asp252) interacts with L-methionine. Lys283 is an L-methionine binding site.

This sequence belongs to the AdoMet synthase family. As to quaternary structure, homotetramer; dimer of dimers. Mg(2+) is required as a cofactor. The cofactor is K(+).

The protein resides in the cytoplasm. It catalyses the reaction L-methionine + ATP + H2O = S-adenosyl-L-methionine + phosphate + diphosphate. Its pathway is amino-acid biosynthesis; S-adenosyl-L-methionine biosynthesis; S-adenosyl-L-methionine from L-methionine: step 1/1. Its function is as follows. Catalyzes the formation of S-adenosylmethionine (AdoMet) from methionine and ATP. The overall synthetic reaction is composed of two sequential steps, AdoMet formation and the subsequent tripolyphosphate hydrolysis which occurs prior to release of AdoMet from the enzyme. This is S-adenosylmethionine synthase from Desulfotalea psychrophila (strain LSv54 / DSM 12343).